Here is a 156-residue protein sequence, read N- to C-terminus: E3 ubiquitin-protein ligase RNF181 (156 aa).

An RING-type; atypical zinc finger spans residues cysteine 79–arginine 120.

It belongs to the RNF181 family.

It carries out the reaction S-ubiquitinyl-[E2 ubiquitin-conjugating enzyme]-L-cysteine + [acceptor protein]-L-lysine = [E2 ubiquitin-conjugating enzyme]-L-cysteine + N(6)-ubiquitinyl-[acceptor protein]-L-lysine.. The protein operates within protein modification; protein ubiquitination. In terms of biological role, E3 ubiquitin-protein ligase which accepts ubiquitin from an E2 ubiquitin-conjugating enzyme in the form of a thioester and then directly transfers the ubiquitin to targeted substrates. Catalyzes monoubiquitination of 26S proteasome subunit PSMC2/RPT1. This chain is E3 ubiquitin-protein ligase RNF181 (rnf181), found in Xenopus laevis (African clawed frog).